The following is a 207-amino-acid chain: 2,3-bisphosphoglycerate-dependent phosphoglycerate mutase (207 aa).

Residues 10–17 (RHGQSEWN), 23–24 (TG), Arg-62, 89–92 (ERDY), Lys-100, 116–117 (RR), and 160–161 (GN) each bind substrate. The active-site Tele-phosphohistidine intermediate is His-11. The Proton donor/acceptor role is filled by Glu-89.

The protein belongs to the phosphoglycerate mutase family. BPG-dependent PGAM subfamily. Homodimer.

The catalysed reaction is (2R)-2-phosphoglycerate = (2R)-3-phosphoglycerate. It functions in the pathway carbohydrate degradation; glycolysis; pyruvate from D-glyceraldehyde 3-phosphate: step 3/5. Its function is as follows. Catalyzes the interconversion of 2-phosphoglycerate and 3-phosphoglycerate. The chain is 2,3-bisphosphoglycerate-dependent phosphoglycerate mutase from Rhodopseudomonas palustris (strain BisB18).